Here is a 320-residue protein sequence, read N- to C-terminus: Aspartate carbamoyltransferase catalytic subunit (320 aa).

The carbamoyl phosphate site is built by Arg-68 and Thr-69. Lys-96 provides a ligand contact to L-aspartate. Residues Arg-118, His-148, and Gln-151 each coordinate carbamoyl phosphate. L-aspartate contacts are provided by Arg-181 and Arg-236. Residues Gly-277 and Pro-278 each coordinate carbamoyl phosphate.

This sequence belongs to the aspartate/ornithine carbamoyltransferase superfamily. ATCase family. Heterododecamer (2C3:3R2) of six catalytic PyrB chains organized as two trimers (C3), and six regulatory PyrI chains organized as three dimers (R2).

The catalysed reaction is carbamoyl phosphate + L-aspartate = N-carbamoyl-L-aspartate + phosphate + H(+). It functions in the pathway pyrimidine metabolism; UMP biosynthesis via de novo pathway; (S)-dihydroorotate from bicarbonate: step 2/3. In terms of biological role, catalyzes the condensation of carbamoyl phosphate and aspartate to form carbamoyl aspartate and inorganic phosphate, the committed step in the de novo pyrimidine nucleotide biosynthesis pathway. The sequence is that of Aspartate carbamoyltransferase catalytic subunit from Acidovorax ebreus (strain TPSY) (Diaphorobacter sp. (strain TPSY)).